Here is a 143-residue protein sequence, read N- to C-terminus: Nucleoside diphosphate kinase (143 aa).

Residues K11, F59, R87, T93, R104, and N114 each contribute to the ATP site. The active-site Pros-phosphohistidine intermediate is the H117.

This sequence belongs to the NDK family. As to quaternary structure, homotetramer. The cofactor is Mg(2+).

It is found in the cytoplasm. The catalysed reaction is a 2'-deoxyribonucleoside 5'-diphosphate + ATP = a 2'-deoxyribonucleoside 5'-triphosphate + ADP. The enzyme catalyses a ribonucleoside 5'-diphosphate + ATP = a ribonucleoside 5'-triphosphate + ADP. Functionally, major role in the synthesis of nucleoside triphosphates other than ATP. The ATP gamma phosphate is transferred to the NDP beta phosphate via a ping-pong mechanism, using a phosphorylated active-site intermediate. The polypeptide is Nucleoside diphosphate kinase (Ectopseudomonas mendocina (strain ymp) (Pseudomonas mendocina)).